The following is an 86-amino-acid chain: MAEADDPQDIADRERIFKRFDANGDGQISATELGETLQTLGSVTPEEVKYMMDEIDTNKDGFISFQEFIEFARANRGLIRDVAKIF.

EF-hand domains are found at residues 8–42 (QDIADRERIFKRFDANGDGQISATELGETLQTLGS) and 43–78 (VTPEEVKYMMDEIDTNKDGFISFQEFIEFARANRGL). Positions 21, 23, 25, 27, 32, 56, 58, 60, and 67 each coordinate Ca(2+).

The polypeptide is Polcalcin Nic t 2 (Nict2) (Nicotiana tabacum (Common tobacco)).